Consider the following 89-residue polypeptide: MAHKKAGGSSKNGRDSNAQRRGVKRFGGQEVLAGNILVRQVGSKVHAGKNVGTGKDWTLFALVDGVVKYEKYIRKNRVKTRVHIVPAEA.

Positions 1-26 (MAHKKAGGSSKNGRDSNAQRRGVKRF) are disordered.

The protein belongs to the bacterial ribosomal protein bL27 family.

The sequence is that of Large ribosomal subunit protein bL27 from Maridesulfovibrio salexigens (strain ATCC 14822 / DSM 2638 / NCIMB 8403 / VKM B-1763) (Desulfovibrio salexigens).